The primary structure comprises 159 residues: Phosphopantetheine adenylyltransferase (159 aa).

Serine 9 is a substrate binding site. Residues serine 9–phenylalanine 10 and histidine 17 contribute to the ATP site. Substrate-binding residues include lysine 41, leucine 73, and lysine 87. Residues glycine 88–arginine 90, glutamate 98, and tyrosine 123–serine 129 each bind ATP.

It belongs to the bacterial CoaD family. In terms of assembly, homohexamer. Mg(2+) serves as cofactor.

It localises to the cytoplasm. The catalysed reaction is (R)-4'-phosphopantetheine + ATP + H(+) = 3'-dephospho-CoA + diphosphate. It participates in cofactor biosynthesis; coenzyme A biosynthesis; CoA from (R)-pantothenate: step 4/5. Its function is as follows. Reversibly transfers an adenylyl group from ATP to 4'-phosphopantetheine, yielding dephospho-CoA (dPCoA) and pyrophosphate. The polypeptide is Phosphopantetheine adenylyltransferase (Thermoanaerobacter pseudethanolicus (strain ATCC 33223 / 39E) (Clostridium thermohydrosulfuricum)).